An 800-amino-acid polypeptide reads, in one-letter code: DNA topoisomerase 4 subunit A (800 aa).

A Topo IIA-type catalytic domain is found at L31–V496. The O-(5'-phospho-DNA)-tyrosine intermediate role is filled by Y119.

This sequence belongs to the type II topoisomerase GyrA/ParC subunit family. ParC type 2 subfamily. Heterotetramer composed of ParC and ParE.

It localises to the cell membrane. It catalyses the reaction ATP-dependent breakage, passage and rejoining of double-stranded DNA.. Its function is as follows. Topoisomerase IV is essential for chromosome segregation. It relaxes supercoiled DNA. Performs the decatenation events required during the replication of a circular DNA molecule. This Staphylococcus epidermidis (strain ATCC 12228 / FDA PCI 1200) protein is DNA topoisomerase 4 subunit A.